The primary structure comprises 424 residues: Arginine biosynthesis bifunctional protein ArgJ (424 aa).

Substrate contacts are provided by Thr172, Lys198, Thr209, Glu296, Asn419, and Ser424. The Nucleophile role is filled by Thr209.

Belongs to the ArgJ family. In terms of assembly, heterotetramer of two alpha and two beta chains.

The protein resides in the cytoplasm. It catalyses the reaction N(2)-acetyl-L-ornithine + L-glutamate = N-acetyl-L-glutamate + L-ornithine. It carries out the reaction L-glutamate + acetyl-CoA = N-acetyl-L-glutamate + CoA + H(+). It participates in amino-acid biosynthesis; L-arginine biosynthesis; L-ornithine and N-acetyl-L-glutamate from L-glutamate and N(2)-acetyl-L-ornithine (cyclic): step 1/1. It functions in the pathway amino-acid biosynthesis; L-arginine biosynthesis; N(2)-acetyl-L-ornithine from L-glutamate: step 1/4. Catalyzes two activities which are involved in the cyclic version of arginine biosynthesis: the synthesis of N-acetylglutamate from glutamate and acetyl-CoA as the acetyl donor, and of ornithine by transacetylation between N(2)-acetylornithine and glutamate. In Gluconobacter oxydans (strain 621H) (Gluconobacter suboxydans), this protein is Arginine biosynthesis bifunctional protein ArgJ.